Consider the following 607-residue polypeptide: Elongation factor 4 (607 aa).

In terms of domain architecture, tr-type G spans 6 to 188 (SRIRNFSIIA…AIVARIPPPR (183 aa)). GTP-binding positions include 18–23 (DHGKST) and 135–138 (NKID).

It belongs to the TRAFAC class translation factor GTPase superfamily. Classic translation factor GTPase family. LepA subfamily.

Its subcellular location is the cell inner membrane. It carries out the reaction GTP + H2O = GDP + phosphate + H(+). Its function is as follows. Required for accurate and efficient protein synthesis under certain stress conditions. May act as a fidelity factor of the translation reaction, by catalyzing a one-codon backward translocation of tRNAs on improperly translocated ribosomes. Back-translocation proceeds from a post-translocation (POST) complex to a pre-translocation (PRE) complex, thus giving elongation factor G a second chance to translocate the tRNAs correctly. Binds to ribosomes in a GTP-dependent manner. This Sphingopyxis alaskensis (strain DSM 13593 / LMG 18877 / RB2256) (Sphingomonas alaskensis) protein is Elongation factor 4.